Consider the following 106-residue polypeptide: UPF0145 protein CTC_01500 (106 aa).

It belongs to the UPF0145 family.

This chain is UPF0145 protein CTC_01500, found in Clostridium tetani (strain Massachusetts / E88).